The sequence spans 248 residues: Deoxyribose-phosphate aldolase (248 aa).

Asp-117 acts as the Proton donor/acceptor in catalysis. Lys-179 functions as the Schiff-base intermediate with acetaldehyde in the catalytic mechanism. The active-site Proton donor/acceptor is the Lys-208.

This sequence belongs to the DeoC/FbaB aldolase family. DeoC type 1 subfamily.

The protein localises to the cytoplasm. The enzyme catalyses 2-deoxy-D-ribose 5-phosphate = D-glyceraldehyde 3-phosphate + acetaldehyde. The protein operates within carbohydrate degradation; 2-deoxy-D-ribose 1-phosphate degradation; D-glyceraldehyde 3-phosphate and acetaldehyde from 2-deoxy-alpha-D-ribose 1-phosphate: step 2/2. Catalyzes a reversible aldol reaction between acetaldehyde and D-glyceraldehyde 3-phosphate to generate 2-deoxy-D-ribose 5-phosphate. The polypeptide is Deoxyribose-phosphate aldolase (Thermotoga maritima (strain ATCC 43589 / DSM 3109 / JCM 10099 / NBRC 100826 / MSB8)).